Here is a 298-residue protein sequence, read N- to C-terminus: GTP cyclohydrolase FolE2 (298 aa).

It belongs to the GTP cyclohydrolase IV family.

It catalyses the reaction GTP + H2O = 7,8-dihydroneopterin 3'-triphosphate + formate + H(+). It functions in the pathway cofactor biosynthesis; 7,8-dihydroneopterin triphosphate biosynthesis; 7,8-dihydroneopterin triphosphate from GTP: step 1/1. Converts GTP to 7,8-dihydroneopterin triphosphate. The polypeptide is GTP cyclohydrolase FolE2 (Neisseria meningitidis serogroup C (strain 053442)).